A 345-amino-acid polypeptide reads, in one-letter code: N-acetyl-gamma-glutamyl-phosphate reductase (345 aa).

The active site involves cysteine 149.

This sequence belongs to the NAGSA dehydrogenase family. Type 1 subfamily.

It is found in the cytoplasm. The enzyme catalyses N-acetyl-L-glutamate 5-semialdehyde + phosphate + NADP(+) = N-acetyl-L-glutamyl 5-phosphate + NADPH + H(+). Its pathway is amino-acid biosynthesis; L-arginine biosynthesis; N(2)-acetyl-L-ornithine from L-glutamate: step 3/4. In terms of biological role, catalyzes the NADPH-dependent reduction of N-acetyl-5-glutamyl phosphate to yield N-acetyl-L-glutamate 5-semialdehyde. The sequence is that of N-acetyl-gamma-glutamyl-phosphate reductase from Bacillus cytotoxicus (strain DSM 22905 / CIP 110041 / 391-98 / NVH 391-98).